The primary structure comprises 787 residues: MPQPLKQSLDQSKWLREAEKHLRELENLVDSNLEEEKLKPQLSMGEDVQSPGKGEPLHPNVRAPLSHVVRAATIDLPRLGNKLPAKHHLGKLSGLYQMKGCTFNPEWKVPDISDTHFDLQVLNECPSRNWKYLTPAKFWPKSISYFPVQAGVKAKYPDNVMQHESIVGKYLTRLYEAGILYKRISKHLVTFKGQPYKWEHQYLVKQHQIPDGATTRKINGRAENRRRGDPAKSISRPHDPKRGCNMVRQISNNRSSIRPCANNGGDKHSPTTRRLACWGGKASRINQSYSSRDSSAPVDARGRSESAGSLSSLSGRKAAGNHHHSTLINPSVETTARGRSTPGEQISARDTSALPESRASRACNKDSSIKEENVWYLRGNTSWPNRITGKLFLVDKNSRNTTEARLVVDFSQFSKGKNAMRFPRYWSPNLSTLRRILPVGMPRISLDLSQAFYHLPLNPASSSRLAVSDGQRVYYFRKAPMGVGLSPFLLHLFTTALGSEIARRFNVWTFTYMDDFLLCHPNARHLNSISHAVCTFLQELGIRINFDKTTPSPVTEIRFLGYQIDQKFMKIEEDRWKELRTVIKKIKVGAWYDWKCIQRFVGHLNFVLPFTKGNLEMLKPMYAAITNKVNFSFSSAYRTLLYKLTMGVCKLAIKPKSSVPLPRVATDATPTHGAISHITGGSAVFAFSKVRDIHIQELLMVCLAKLMIKPRCILTDSTFVCHKRYQTLPWHFAMLAKQLLSPMQLYFVPSKYNPADGPSRHKPPDWTALTYTPLSKAIYIPHRLCGT.

The segment at 1-200 is terminal protein domain (TP); that stretch reads MPQPLKQSLD…FKGQPYKWEH (200 aa). 3 disordered regions span residues 28 to 60, 210 to 274, and 286 to 365; these read LVDS…LHPN, PDGA…TTRR, and NQSY…ACNK. A spacer region spans residues 201–365; the sequence is QYLVKQHQIP…ESRASRACNK (165 aa). Residues 220–242 are compositionally biased toward basic and acidic residues; the sequence is GRAENRRRGDPAKSISRPHDPKR. The segment covering 305 to 318 has biased composition (low complexity); the sequence is ESAGSLSSLSGRKA. The span at 326 to 350 shows a compositional bias: polar residues; the sequence is TLINPSVETTARGRSTPGEQISARD. Residues 366–654 form a polymerase/reverse transcriptase domain (RT) region; sequence DSSIKEENVW…TMGVCKLAIK (289 aa). The region spanning 375–564 is the Reverse transcriptase domain; sequence WYLRGNTSWP…TEIRFLGYQI (190 aa). Mg(2+) is bound by residues Asp-447, Asp-514, and Asp-515. The rnaseH domain (RH) stretch occupies residues 655 to 787; that stretch reads PKSSVPLPRV…IYIPHRLCGT (133 aa).

It belongs to the hepadnaviridae P protein family.

It carries out the reaction DNA(n) + a 2'-deoxyribonucleoside 5'-triphosphate = DNA(n+1) + diphosphate. The enzyme catalyses Endonucleolytic cleavage to 5'-phosphomonoester.. Its activity is regulated as follows. Activated by host HSP70 and HSP40 in vitro to be able to bind the epsilon loop of the pgRNA. Because deletion of the RNase H region renders the protein partly chaperone-independent, the chaperones may be needed indirectly to relieve occlusion of the RNA-binding site by this domain. Its function is as follows. Multifunctional enzyme that converts the viral RNA genome into dsDNA in viral cytoplasmic capsids. This enzyme displays a DNA polymerase activity that can copy either DNA or RNA templates, and a ribonuclease H (RNase H) activity that cleaves the RNA strand of RNA-DNA heteroduplexes in a partially processive 3'- to 5'-endonucleasic mode. Neo-synthesized pregenomic RNA (pgRNA) are encapsidated together with the P protein, and reverse-transcribed inside the nucleocapsid. Initiation of reverse-transcription occurs first by binding the epsilon loop on the pgRNA genome, and is initiated by protein priming, thereby the 5'-end of (-)DNA is covalently linked to P protein. Partial (+)DNA is synthesized from the (-)DNA template and generates the relaxed circular DNA (RC-DNA) genome. After budding and infection, the RC-DNA migrates in the nucleus, and is converted into a plasmid-like covalently closed circular DNA (cccDNA). The activity of P protein does not seem to be necessary for cccDNA generation, and is presumably released from (+)DNA by host nuclear DNA repair machinery. The protein is Protein P (P) of Anas (ducks).